We begin with the raw amino-acid sequence, 225 residues long: Zinc finger protein 22 (225 aa).

Residues 1–35 (MRLGKPKGGISRSSSQGKVYENQRKTGRQRQRWGM) are disordered. N6-acetyllysine is present on Lys18. 5 consecutive C2H2-type zinc fingers follow at residues 55–77 (YKCV…QKIH), 83–105 (HKCA…RRVH), 111–133 (YRCD…QRIH), 139–161 (YQCD…QRTH), and 167–189 (YQCS…TKVH). Residues 183–225 (RQHTKVHEEEKPRKTRGRSLRAKTHSLSSWKAGKGRRSAAGLR) are disordered. The span at 195–206 (RKTRGRSLRAKT) shows a compositional bias: basic residues.

The protein belongs to the krueppel C2H2-type zinc-finger protein family.

The protein resides in the nucleus. Binds DNA through the consensus sequence 5'-CAATG-3'. May be involved in transcriptional regulation and may play a role in tooth formation. This chain is Zinc finger protein 22 (ZNF22), found in Bos taurus (Bovine).